Consider the following 75-residue polypeptide: Large ribosomal subunit protein uL29 (75 aa).

This sequence belongs to the universal ribosomal protein uL29 family.

The polypeptide is Large ribosomal subunit protein uL29 (Nostoc punctiforme (strain ATCC 29133 / PCC 73102)).